Here is a 220-residue protein sequence, read N- to C-terminus: Peritrophin-55 (220 aa).

An N-terminal signal peptide occupies residues 1-19; it reads MKSVFVCTLVLALAHHAFA. N-linked (GlcNAc...) asparagine glycosylation occurs at asparagine 29. Residues 33–95 form the Chitin-binding type-2 domain; that stretch reads ITPCLGNDII…NFIPAPTCEY (63 aa). Residues cysteine 68 and cysteine 84 are joined by a disulfide bond. The span at 116 to 165 shows a compositional bias: low complexity; the sequence is TTLKTTPSKTTPIVTTAPPSTPVPSTIVTNKPDPTTPKTTKPPKVTTTVN. The disordered stretch occupies residues 116 to 220; the sequence is TTLKTTPSKT…TPPSIVQLQN (105 aa). Pro residues predominate over residues 197-210; that stretch reads PTPPGMPPTPPSFG.

Post-translationally, glycosylated. Larval peritrophic membrane.

In terms of biological role, may bind oligosaccharide structures. The protein is Peritrophin-55 of Lucilia cuprina (Green bottle fly).